A 572-amino-acid chain; its full sequence is Cytosolic Fe-S cluster assembly factor NAR1 (572 aa).

The [4Fe-4S] cluster site is built by Cys-20, Cys-62, Cys-65, Cys-68, Cys-205, and Cys-260. The disordered stretch occupies residues 416 to 436 (ARPSRMPGGKPIGSARRPNGK). [4Fe-4S] cluster-binding residues include Cys-450 and Cys-454.

This sequence belongs to the NARF family.

In terms of biological role, component of the cytosolic Fe/S protein assembly machinery. Required for maturation of extramitochondrial Fe/S proteins. May play a role in the transfer of pre-assembled Fe/S clusters to target apoproteins. This Botryotinia fuckeliana (strain B05.10) (Noble rot fungus) protein is Cytosolic Fe-S cluster assembly factor NAR1 (NAR1).